We begin with the raw amino-acid sequence, 183 residues long: uncharacterized protein (183 aa).

This is an uncharacterized protein from Treponema pallidum (strain Nichols).